We begin with the raw amino-acid sequence, 192 residues long: E3 ubiquitin-protein ligase RNF185 (192 aa).

Positions 1-27 (MASKGPSASASPENSSAGGPSGSSNGA) are enriched in low complexity. The interval 1–30 (MASKGPSASASPENSSAGGPSGSSNGAGES) is disordered. Residues 1 to 130 (MASKGPSASA…GGFQGFGFGD (130 aa)) lie on the Cytoplasmic side of the membrane. The segment at 29-80 (ESGGQDSTFECNICLDTAKDAVISLCGHLFCWPCLHQWLETRPNRQVCPVCK) is required for ubiquitin ligase activity and protection against ER stress-induced cell death. The RING-type zinc-finger motif lies at 39–80 (CNICLDTAKDAVISLCGHLFCWPCLHQWLETRPNRQVCPVCK). Residues 90–123 (PLYGRGSTGQQDPREKTPPRPQGQRPEPENRGGF) are disordered. A helical transmembrane segment spans residues 131-151 (GGFQMSFGIGAFPFGIFATAF). At 152-171 (NINDGRPPPAVPGTPQYVDE) the chain is on the mitochondrial intermembrane side. The chain crosses the membrane as a helical span at residues 172–192 (QFLSRLFLFVALVIMFWLLIA).

Interacts with ATG5 and BNIP1. As to expression, ubiquitously expressed.

It is found in the mitochondrion outer membrane. The protein resides in the endoplasmic reticulum membrane. It carries out the reaction S-ubiquitinyl-[E2 ubiquitin-conjugating enzyme]-L-cysteine + [acceptor protein]-L-lysine = [E2 ubiquitin-conjugating enzyme]-L-cysteine + N(6)-ubiquitinyl-[acceptor protein]-L-lysine.. Its pathway is protein modification; protein ubiquitination. Its function is as follows. E3 ubiquitin-protein ligase that regulates selective mitochondrial autophagy by mediating 'Lys-63'-linked polyubiquitination of BNIP1. Acts in the endoplasmic reticulum (ER)-associated degradation (ERAD) pathway, which targets misfolded proteins that accumulate in the endoplasmic reticulum (ER) for ubiquitination and subsequent proteasome-mediated degradation. Protects cells from ER stress-induced apoptosis. Responsible for the cotranslational ubiquitination and degradation of CFTR in the ERAD pathway. Also acts as a regulator of the innate antiviral response by catalyzing 'Lys-27'-linked polyubiquitination of CGAS at 'Lys-173' and 'Lys-384', thereby promoting CGAS cyclic GMP-AMP synthase activity. Preferentially associates with the E2 enzymes UBE2J1 and UBE2J2. The sequence is that of E3 ubiquitin-protein ligase RNF185 from Homo sapiens (Human).